Reading from the N-terminus, the 295-residue chain is Protoheme IX farnesyltransferase (295 aa).

9 helical membrane-spanning segments follow: residues 8-28, 35-55, 84-104, 107-127, 132-152, 162-182, 208-228, 233-253, and 264-284; these read VTKPGIIFGNLISVIGGFLLA, YPLFVWTLLGVSLVVASGCVF, ASLVYATLLGIAGFMLLWFGA, LACWLGVMGFVVYVGVYSLYM, VYGTLIGSLSGAAPPVIGYCA, AILLAIFSLWQMPHSYAIAIF, ITLYIVAFAVATLMLSLGGYA, LVVAAAVSVWWLGMALRGYKV, and FVFSIVAITALSVMMSVDFMV.

Belongs to the UbiA prenyltransferase family. Protoheme IX farnesyltransferase subfamily.

Its subcellular location is the cell inner membrane. The catalysed reaction is heme b + (2E,6E)-farnesyl diphosphate + H2O = Fe(II)-heme o + diphosphate. It participates in porphyrin-containing compound metabolism; heme O biosynthesis; heme O from protoheme: step 1/1. Functionally, converts heme B (protoheme IX) to heme O by substitution of the vinyl group on carbon 2 of heme B porphyrin ring with a hydroxyethyl farnesyl side group. The protein is Protoheme IX farnesyltransferase of Klebsiella pneumoniae subsp. pneumoniae (strain ATCC 700721 / MGH 78578).